Consider the following 372-residue polypeptide: Chaperone protein DnaJ (372 aa).

A J domain is found at Asp5 to Gly70. The CR-type zinc-finger motif lies at Gly134–Glu212. Positions 147, 150, 164, 167, 186, 189, 200, and 203 each coordinate Zn(2+). CXXCXGXG motif repeat units follow at residues Cys147 to Gly154, Cys164 to Gly171, Cys186 to Gly193, and Cys200 to Gly207.

It belongs to the DnaJ family. As to quaternary structure, homodimer. Zn(2+) serves as cofactor.

The protein resides in the cytoplasm. Its function is as follows. Participates actively in the response to hyperosmotic and heat shock by preventing the aggregation of stress-denatured proteins and by disaggregating proteins, also in an autonomous, DnaK-independent fashion. Unfolded proteins bind initially to DnaJ; upon interaction with the DnaJ-bound protein, DnaK hydrolyzes its bound ATP, resulting in the formation of a stable complex. GrpE releases ADP from DnaK; ATP binding to DnaK triggers the release of the substrate protein, thus completing the reaction cycle. Several rounds of ATP-dependent interactions between DnaJ, DnaK and GrpE are required for fully efficient folding. Also involved, together with DnaK and GrpE, in the DNA replication of plasmids through activation of initiation proteins. This chain is Chaperone protein DnaJ, found in Wolbachia pipientis subsp. Culex pipiens (strain wPip).